We begin with the raw amino-acid sequence, 891 residues long: Alanine--tRNA ligase (891 aa).

Residues His-569, His-573, Cys-671, and His-675 each contribute to the Zn(2+) site.

This sequence belongs to the class-II aminoacyl-tRNA synthetase family. As to quaternary structure, homotetramer. Zn(2+) is required as a cofactor.

It localises to the cytoplasm. The enzyme catalyses tRNA(Ala) + L-alanine + ATP = L-alanyl-tRNA(Ala) + AMP + diphosphate. Catalyzes the attachment of alanine to tRNA(Ala) in a two-step reaction: alanine is first activated by ATP to form Ala-AMP and then transferred to the acceptor end of tRNA(Ala). Also edits incorrectly charged Ser-tRNA(Ala) and Gly-tRNA(Ala) via its editing domain. The polypeptide is Alanine--tRNA ligase (Blochmanniella floridana).